A 118-amino-acid chain; its full sequence is C-X-C motif chemokine 17 (118 aa).

The first 22 residues, 1–22 (MKVLISSLLLLLPLMLMSVVSS), serve as a signal peptide directing secretion. 2 cysteine pairs are disulfide-bonded: C74–C102 and C76–C109.

Belongs to the intercrine alpha (chemokine CxC) family.

Its subcellular location is the secreted. In terms of biological role, chemokine that acts as a chemoattractant for monocytes, macrophages and dendritic cells. Plays a role in angiogenesis and possibly in the development of tumors. Acts as an anti-inflammatory in the stomach. May play a role in the innate defense against infections. Activates the C-X-C chemokine receptor GPR35 to induce a rapid and transient rise in the level of intracellular calcium ions. In Bos taurus (Bovine), this protein is C-X-C motif chemokine 17 (CXCL17).